A 37-amino-acid polypeptide reads, in one-letter code: Large ribosomal subunit protein bL36 (37 aa).

Belongs to the bacterial ribosomal protein bL36 family.

This Endomicrobium trichonymphae protein is Large ribosomal subunit protein bL36.